A 739-amino-acid chain; its full sequence is Phosphoribosylformylglycinamidine synthase subunit PurL (739 aa).

Residue H54 is part of the active site. Residues Y57 and K96 each contribute to the ATP site. E98 serves as a coordination point for Mg(2+). Residues 99–102 (SHNH) and R121 contribute to the substrate site. H100 (proton acceptor) is an active-site residue. Residue D122 participates in Mg(2+) binding. Q245 provides a ligand contact to substrate. A Mg(2+)-binding site is contributed by D273. A substrate-binding site is contributed by 317–319 (ESQ). Residues D500 and G537 each coordinate ATP. N538 contributes to the Mg(2+) binding site. S540 contributes to the substrate binding site.

The protein belongs to the FGAMS family. Monomer. Part of the FGAM synthase complex composed of 1 PurL, 1 PurQ and 2 PurS subunits.

The protein localises to the cytoplasm. It carries out the reaction N(2)-formyl-N(1)-(5-phospho-beta-D-ribosyl)glycinamide + L-glutamine + ATP + H2O = 2-formamido-N(1)-(5-O-phospho-beta-D-ribosyl)acetamidine + L-glutamate + ADP + phosphate + H(+). The protein operates within purine metabolism; IMP biosynthesis via de novo pathway; 5-amino-1-(5-phospho-D-ribosyl)imidazole from N(2)-formyl-N(1)-(5-phospho-D-ribosyl)glycinamide: step 1/2. Functionally, part of the phosphoribosylformylglycinamidine synthase complex involved in the purines biosynthetic pathway. Catalyzes the ATP-dependent conversion of formylglycinamide ribonucleotide (FGAR) and glutamine to yield formylglycinamidine ribonucleotide (FGAM) and glutamate. The FGAM synthase complex is composed of three subunits. PurQ produces an ammonia molecule by converting glutamine to glutamate. PurL transfers the ammonia molecule to FGAR to form FGAM in an ATP-dependent manner. PurS interacts with PurQ and PurL and is thought to assist in the transfer of the ammonia molecule from PurQ to PurL. In Exiguobacterium sp. (strain ATCC BAA-1283 / AT1b), this protein is Phosphoribosylformylglycinamidine synthase subunit PurL.